The chain runs to 198 residues: Recombination protein RecR (198 aa).

Residues 58–73 form a C4-type zinc finger; it reads CLNCGNVGTSDICDIC. Positions 81–175 constitute a Toprim domain; the sequence is GELCVVEDVA…RLTSLAQGVP (95 aa).

Belongs to the RecR family.

Functionally, may play a role in DNA repair. It seems to be involved in an RecBC-independent recombinational process of DNA repair. It may act with RecF and RecO. The polypeptide is Recombination protein RecR (Ruegeria pomeroyi (strain ATCC 700808 / DSM 15171 / DSS-3) (Silicibacter pomeroyi)).